The following is a 61-amino-acid chain: Small ribosomal subunit protein uS14B (61 aa).

Residues Cys24, Cys27, Cys40, and Cys43 each coordinate Zn(2+).

It belongs to the universal ribosomal protein uS14 family. Zinc-binding uS14 subfamily. Part of the 30S ribosomal subunit. Contacts proteins S3 and S10. Zn(2+) is required as a cofactor.

Binds 16S rRNA, required for the assembly of 30S particles and may also be responsible for determining the conformation of the 16S rRNA at the A site. This chain is Small ribosomal subunit protein uS14B, found in Kineococcus radiotolerans (strain ATCC BAA-149 / DSM 14245 / SRS30216).